The chain runs to 413 residues: F-box/kelch-repeat protein At5g26960 (413 aa).

One can recognise an F-box domain in the interval 41 to 90 (SATIASLPDDLLLECISRVPSSSIPSLAVVCRRWSRLLHSPYFLHLRRRL). 5 Kelch repeats span residues 96–141 (SLFA…YGSL), 152–191 (RVYV…VVSG), 192–238 (KIYV…AVDG), 240–295 (FYVI…AAVG), and 367–413 (LLRR…CVEW).

This is F-box/kelch-repeat protein At5g26960 from Arabidopsis thaliana (Mouse-ear cress).